Here is a 188-residue protein sequence, read N- to C-terminus: Pro-adrenomedullin (188 aa).

The first 21 residues, 1–21 (MKLVPVALMYLGSLAFLGADT), serve as a signal peptide directing secretion. Arginine 41 carries the post-translational modification Arginine amide. Residues 45–92 (ELRLSSSYPTGIADLKAGPAQTVIRPQDVKGSSRSPQASIPDAARIRV) constitute a propeptide that is removed on maturation. The cysteines at positions 110 and 115 are disulfide-linked. Residues 131–177 (DKDGVAPRSKISPQGYGRRRRRSLPEASLGRTLRSQEPQAHGAPASP) are disordered. Position 146 is a tyrosine amide (tyrosine 146). A propeptide spans 153-188 (SLPEASLGRTLRSQEPQAHGAPASPAHQVLATLFRI) (preproAM C-terminal fragment).

It belongs to the adrenomedullin family. In terms of tissue distribution, highly expressed in adrenal glands, lung and kidney.

The protein resides in the secreted. Functionally, adrenomedullin/ADM and proadrenomedullin N-20 terminal peptide/PAMP are peptide hormones that act as potent hypotensive and vasodilatator agents. Numerous actions have been reported most related to the physiologic control of fluid and electrolyte homeostasis. ADM function is mediated by the CALCRL-RAMP2 and CALCRL-RAMP3 receptor complexes with ADM showing the highest potency for the CALCRL-RAMP2 complex. This chain is Pro-adrenomedullin (ADM), found in Sus scrofa (Pig).